A 969-amino-acid chain; its full sequence is Isoleucine--tRNA ligase (969 aa).

A 'HIGH' region motif is present at residues 68–78 (PYANGNLHMGH). E584 provides a ligand contact to L-isoleucyl-5'-AMP. Positions 625 to 629 (KMSKS) match the 'KMSKS' region motif. K628 contributes to the ATP binding site. Zn(2+)-binding residues include C938, C941, C958, and C961.

It belongs to the class-I aminoacyl-tRNA synthetase family. IleS type 1 subfamily. In terms of assembly, monomer. Zn(2+) serves as cofactor.

It localises to the cytoplasm. The catalysed reaction is tRNA(Ile) + L-isoleucine + ATP = L-isoleucyl-tRNA(Ile) + AMP + diphosphate. Its function is as follows. Catalyzes the attachment of isoleucine to tRNA(Ile). As IleRS can inadvertently accommodate and process structurally similar amino acids such as valine, to avoid such errors it has two additional distinct tRNA(Ile)-dependent editing activities. One activity is designated as 'pretransfer' editing and involves the hydrolysis of activated Val-AMP. The other activity is designated 'posttransfer' editing and involves deacylation of mischarged Val-tRNA(Ile). The sequence is that of Isoleucine--tRNA ligase from Prochlorococcus marinus (strain SARG / CCMP1375 / SS120).